We begin with the raw amino-acid sequence, 490 residues long: Sphingomyelinase (490 aa).

Residues Met1–Ala31 form the signal peptide. The disordered stretch occupies residues Ser30 to Ser49. The Periplasmic portion of the chain corresponds to Ala32–Arg136. Residues Met137–Gly145 traverse the membrane as a beta stranded segment. Residues Ala146–Thr161 are Extracellular-facing. The chain crosses the membrane as a beta stranded span at residues Ala162–Ala168. At Asp169–Gly171 the chain is on the periplasmic side. The beta stranded transmembrane segment at Phe172–Val182 threads the bilayer. The Extracellular segment spans residues Ser183–Ser187. Residues Leu188–Tyr196 form a beta stranded membrane-spanning segment. Residues Leu197–Asp204 are Periplasmic-facing. Residues Asp205 to Val213 traverse the membrane as a beta stranded segment. Topologically, residues Gly214–Arg490 are extracellular.

Belongs to the SpmT family.

The protein localises to the cell outer membrane. The enzyme catalyses a sphingomyelin + H2O = phosphocholine + an N-acylsphing-4-enine + H(+). Functionally, catalyzes the cleavage of sphingomyelin, a major lipid in eukaryotic cells, into ceramide and phosphocholine, which are then utilized by M.bovis as carbon, nitrogen and phosphorus sources, respectively. Thus, enables M.bovis to utilize sphingomyelin as a source of several essential nutrients for intracellular growth during infection. Furthermore, lyses erythrocytes and constitutes a hemolytic factor. The sequence is that of Sphingomyelinase from Mycobacterium bovis (strain ATCC BAA-935 / AF2122/97).